A 491-amino-acid chain; its full sequence is MANYFNTLNLRQQLAQLGKCRFMARDEFADGASYLQGKKVVIVGCGAQGLNQGLNMRDSGLDISYALRKEAIAEKRASWRKATENGFKVGTYEELVPQADLVVNLTPDKQHSDVVRSVQPLMKDGAALGYSHGFNIVEVGEQIRKDITVVMVAPKCPGTEVREEYKRGFGVPTLIAVHPENDPKGEGMAIAKAWAAATGGHRAGVLESSFVAEVKSDLMGEQTILCGMLQAGSLLCFDKLVEEGTDPAYAEKLIQFGWETITEALKQGGITLMMDRLSNPAKLRAYALSEQLKEIMAPLFQKHMDDIISGEFSSGMMSDWANDDKNLLTWREETGKTAFETASQFDGKISEQEYFDKGVLMIAMVKAGVELAFETMVDSGIIEESAYYESLHELPLIANTIARKRLYEMNVVISDTAEYGNYLFSYACVPLLKEFMTTLQTGDLGKAVAEGAVDNAQLRDVNEAIRSHAIESVGHTLRGYMKDMKRIAVAG.

One can recognise a KARI N-terminal Rossmann domain in the interval 15–208 (AQLGKCRFMA…GGHRAGVLES (194 aa)). NADP(+)-binding positions include 45–48 (CGAQ), Arg-68, Arg-76, Ser-78, and 108–110 (DKQ). Residue His-132 is part of the active site. Position 158 (Gly-158) interacts with NADP(+). 2 consecutive KARI C-terminal knotted domains span residues 209–344 (SFVA…TASQ) and 345–484 (FDGK…MKDM). Mg(2+)-binding residues include Asp-217, Glu-221, Glu-389, and Glu-393. A substrate-binding site is contributed by Ser-414.

Belongs to the ketol-acid reductoisomerase family. Mg(2+) is required as a cofactor.

The catalysed reaction is (2R)-2,3-dihydroxy-3-methylbutanoate + NADP(+) = (2S)-2-acetolactate + NADPH + H(+). It carries out the reaction (2R,3R)-2,3-dihydroxy-3-methylpentanoate + NADP(+) = (S)-2-ethyl-2-hydroxy-3-oxobutanoate + NADPH + H(+). It functions in the pathway amino-acid biosynthesis; L-isoleucine biosynthesis; L-isoleucine from 2-oxobutanoate: step 2/4. The protein operates within amino-acid biosynthesis; L-valine biosynthesis; L-valine from pyruvate: step 2/4. Its function is as follows. Involved in the biosynthesis of branched-chain amino acids (BCAA). Catalyzes an alkyl-migration followed by a ketol-acid reduction of (S)-2-acetolactate (S2AL) to yield (R)-2,3-dihydroxy-isovalerate. In the isomerase reaction, S2AL is rearranged via a Mg-dependent methyl migration to produce 3-hydroxy-3-methyl-2-ketobutyrate (HMKB). In the reductase reaction, this 2-ketoacid undergoes a metal-dependent reduction by NADPH to yield (R)-2,3-dihydroxy-isovalerate. The protein is Ketol-acid reductoisomerase (NADP(+)) of Enterobacter sp. (strain 638).